The chain runs to 167 residues: Small ribosomal subunit protein uS3m (167 aa).

Residues 1–35 (MAASVCSGLLGPRVLSWSRELPCAWRALHTSPVCA) constitute a mitochondrion transit peptide.

Belongs to the universal ribosomal protein uS3 family. Component of the mitochondrial small ribosomal subunit (mt-SSU). Mature mammalian 55S mitochondrial ribosomes consist of a small (28S) and a large (39S) subunit. The 28S small subunit contains a 12S ribosomal RNA (12S mt-rRNA) and 30 different proteins. The 39S large subunit contains a 16S rRNA (16S mt-rRNA), a copy of mitochondrial valine transfer RNA (mt-tRNA(Val)), which plays an integral structural role, and 52 different proteins.

The protein resides in the mitochondrion. In Homo sapiens (Human), this protein is Small ribosomal subunit protein uS3m (MRPS24).